Here is a 245-residue protein sequence, read N- to C-terminus: 8-amino-3,8-dideoxy-manno-octulosonate cytidylyltransferase (245 aa).

Belongs to the KdsB family.

Its subcellular location is the cytoplasm. It carries out the reaction 8-amino-3,8-dideoxy-alpha-D-manno-octulosonate + CTP = CMP-8-amino-3,8-dideoxy-alpha-D-manno-oct-2-ulosonate + diphosphate. It participates in bacterial outer membrane biogenesis; lipopolysaccharide biosynthesis. Its function is as follows. Activates KDO8N (a required 8-carbon sugar) for incorporation into bacterial lipopolysaccharide in the Shewanella genus. In Shewanella putrefaciens (strain CN-32 / ATCC BAA-453), this protein is 8-amino-3,8-dideoxy-manno-octulosonate cytidylyltransferase.